Reading from the N-terminus, the 534-residue chain is Glucans biosynthesis protein D (534 aa).

Residues 1–26 constitute a signal peptide (tat-type signal); sequence MQRRDFIRNASLALAAFGLPSLPACA.

It belongs to the OpgD/OpgG family. In terms of processing, predicted to be exported by the Tat system. The position of the signal peptide cleavage has not been experimentally proven.

The protein localises to the periplasm. Its pathway is glycan metabolism; osmoregulated periplasmic glucan (OPG) biosynthesis. Probably involved in the control of the structural glucose backbone of osmoregulated periplasmic glucans (OPGs). The polypeptide is Glucans biosynthesis protein D (Stenotrophomonas maltophilia (strain K279a)).